A 120-amino-acid polypeptide reads, in one-letter code: MARIAGVNIPNNAHIVIGLQAIYGIGATRAKLICEAANIAPDTKAKDLDETQLDALRDQVAKYEVEGDLRREVTMSIKRLMDMGCYRGFRHRRGLPCRGQRTRTNARTRKGPRKAIAGKK.

A disordered region spans residues 96 to 120 (PCRGQRTRTNARTRKGPRKAIAGKK).

Belongs to the universal ribosomal protein uS13 family. In terms of assembly, part of the 30S ribosomal subunit. Forms a loose heterodimer with protein S19. Forms two bridges to the 50S subunit in the 70S ribosome.

In terms of biological role, located at the top of the head of the 30S subunit, it contacts several helices of the 16S rRNA. In the 70S ribosome it contacts the 23S rRNA (bridge B1a) and protein L5 of the 50S subunit (bridge B1b), connecting the 2 subunits; these bridges are implicated in subunit movement. Contacts the tRNAs in the A and P-sites. The protein is Small ribosomal subunit protein uS13 of Neisseria gonorrhoeae (strain ATCC 700825 / FA 1090).